Reading from the N-terminus, the 502-residue chain is Glutamate--tRNA ligase (502 aa).

The 'HIGH' region signature appears at P21–M31. The 'KMSKS' region signature appears at K265–R269. K268 is an ATP binding site.

This sequence belongs to the class-I aminoacyl-tRNA synthetase family. Glutamate--tRNA ligase type 1 subfamily. Monomer.

It localises to the cytoplasm. It carries out the reaction tRNA(Glu) + L-glutamate + ATP = L-glutamyl-tRNA(Glu) + AMP + diphosphate. In terms of biological role, catalyzes the attachment of glutamate to tRNA(Glu) in a two-step reaction: glutamate is first activated by ATP to form Glu-AMP and then transferred to the acceptor end of tRNA(Glu). The sequence is that of Glutamate--tRNA ligase from Mycobacterium leprae (strain TN).